A 345-amino-acid polypeptide reads, in one-letter code: Guanine nucleotide-binding protein alpha-4 subunit (345 aa).

One can recognise a G-alpha domain in the interval 30–345 (KDVKLLLLGP…TILSQALEHF (316 aa)). Residues 33 to 46 (KLLLLGPGESGKST) form a G1 motif region. GTP-binding positions include 38-45 (GPGESGKS), 171-177 (LRCRVRT), 196-200 (DVGGQ), 265-268 (NKKD), and Ala320. Residues Ser45 and Thr177 each coordinate Mg(2+). The G2 motif stretch occupies residues 169–177 (DVLRCRVRT). The G3 motif stretch occupies residues 192 to 201 (LKIVDVGGQR). Residues 261–268 (VLFLNKKD) are G4 motif. Residues 318 to 323 (TCAVDT) form a G5 motif region.

Belongs to the G-alpha family. As to quaternary structure, g proteins are composed of 3 units; alpha, beta and gamma. The alpha chain contains the guanine nucleotide binding site.

Guanine nucleotide-binding proteins (G proteins) are involved as modulators or transducers in various transmembrane signaling systems. G alpha-4 plays a role in morphogenesis of the multicellular structure. This is Guanine nucleotide-binding protein alpha-4 subunit (gpaD) from Dictyostelium discoideum (Social amoeba).